The primary structure comprises 191 residues: MSSAKPVLTFVTGNANKLKEVVAILGADFPFELRNQAVDLPELQGEPADIAKEKCRLAAKQVQGAVLVEDTSLCFNALKGLPGPYIKWFLEKTGHDGLNNMLAAYEDKSAYAQCIFAYAPAGAEPQVFVGQTHGKIVPARGPTTFGWDPVFQPDGFEQTYAEMEKVTKNQISHRYKALEALKTHLVKPVDK.

12 to 17 contacts ITP; sequence TGNANK. Residue E42 participates in Mg(2+) binding. ITP is bound by residues K54, 70–71, K87, 145–148, K168, and 173–174; these read DT, FGWD, and HR.

Belongs to the HAM1 NTPase family. In terms of assembly, homodimer. It depends on Mg(2+) as a cofactor. The cofactor is Mn(2+).

The protein resides in the cytoplasm. The catalysed reaction is ITP + H2O = IMP + diphosphate + H(+). It catalyses the reaction dITP + H2O = dIMP + diphosphate + H(+). The enzyme catalyses XTP + H2O = XMP + diphosphate + H(+). In terms of biological role, pyrophosphatase that hydrolyzes non-canonical purine nucleotides such as inosine triphosphate (ITP), deoxyinosine triphosphate (dITP) or xanthosine 5'-triphosphate (XTP) to their respective monophosphate derivatives. The enzyme does not distinguish between the deoxy- and ribose forms. Probably excludes non-canonical purines from RNA and DNA precursor pools, thus preventing their incorporation into RNA and DNA and avoiding chromosomal lesions. This chain is Inosine triphosphate pyrophosphatase, found in Phytophthora infestans (strain T30-4) (Potato late blight agent).